Reading from the N-terminus, the 205-residue chain is Large ribosomal subunit protein uL4 (205 aa).

It belongs to the universal ribosomal protein uL4 family. Part of the 50S ribosomal subunit.

Its function is as follows. One of the primary rRNA binding proteins, this protein initially binds near the 5'-end of the 23S rRNA. It is important during the early stages of 50S assembly. It makes multiple contacts with different domains of the 23S rRNA in the assembled 50S subunit and ribosome. Forms part of the polypeptide exit tunnel. The sequence is that of Large ribosomal subunit protein uL4 from Thermus thermophilus (strain ATCC BAA-163 / DSM 7039 / HB27).